A 467-amino-acid polypeptide reads, in one-letter code: FGNMFDLAGSAPYKKIACLKEKYGPILWLKIGSSMNTMVIQTANSASELFRNHDVSFSDRPIVDVNLAHNYYKGSMALAPYGNYWRFSRRICTVEMFVHKRINETTNIRQESVDKMLRLDEEKASSSGGGGEGIEVTRYMFLASFNMVGNMIFSKDLVTDPESKQGSEFFNAMIGIMEWAGVPNISDIFPCLKMFDVQGLRKKMERDMGKGKEITKKFIEERIEERKKGEKNRSIKDLLDVLIDFEGSGKDEPDKLSEDEITVIILEMFLAGTETTSSSVEWALTELLRHPQAMAKVKLEILQVIGPNKKFEECDIDSLPYMQAVLKEQLRLHPPLPLLIPRKAIQDTKFMGYDIPKGTQVLVNAWAIGRDPEYWDNPFEFKPERFLESKVDVKGQNYELIPFGAGRRMCVGLPLGHRMMHFTFGSLLHEFDWELPHNVSPKSINMEESMGITARKKQPLKVIPKKA.

Residue Cys-410 participates in heme binding.

It belongs to the cytochrome P450 family. Heme serves as cofactor.

This is Cytochrome P450 76A1 (CYP76A1) from Solanum melongena (Eggplant).